Consider the following 92-residue polypeptide: UPF0237 protein MM_0082 (92 aa).

The ACT domain maps to 7 to 81 (IITVIGSDRV…KSLGVEVKVQ (75 aa)).

The protein belongs to the UPF0237 family.

The polypeptide is UPF0237 protein MM_0082 (Methanosarcina mazei (strain ATCC BAA-159 / DSM 3647 / Goe1 / Go1 / JCM 11833 / OCM 88) (Methanosarcina frisia)).